A 160-amino-acid chain; its full sequence is Peptide deformylase 1 (160 aa).

Fe cation contacts are provided by Cys-90 and His-132. Residue Glu-133 is part of the active site. His-136 is a Fe cation binding site.

The protein belongs to the polypeptide deformylase family. Fe(2+) is required as a cofactor.

The enzyme catalyses N-terminal N-formyl-L-methionyl-[peptide] + H2O = N-terminal L-methionyl-[peptide] + formate. Functionally, removes the formyl group from the N-terminal Met of newly synthesized proteins. Requires at least a dipeptide for an efficient rate of reaction. N-terminal L-methionine is a prerequisite for activity but the enzyme has broad specificity at other positions. The polypeptide is Peptide deformylase 1 (defA) (Bacillus subtilis (strain 168)).